A 521-amino-acid polypeptide reads, in one-letter code: Cytochrome P450 52A9 (521 aa).

Heme is bound at residue C468.

It belongs to the cytochrome P450 family. Heme serves as cofactor.

It is found in the membrane. Together with an NADPH cytochrome P450 the enzyme system catalyzes the terminal hydroxylation as the first step in the assimilation of alkanes and fatty acids. The sequence is that of Cytochrome P450 52A9 (CYP52A9) from Candida maltosa (Yeast).